Consider the following 258-residue polypeptide: Tryptophan synthase alpha chain (258 aa).

Residues E52 and D63 each act as proton acceptor in the active site.

Belongs to the TrpA family. As to quaternary structure, tetramer of two alpha and two beta chains.

It carries out the reaction (1S,2R)-1-C-(indol-3-yl)glycerol 3-phosphate + L-serine = D-glyceraldehyde 3-phosphate + L-tryptophan + H2O. It functions in the pathway amino-acid biosynthesis; L-tryptophan biosynthesis; L-tryptophan from chorismate: step 5/5. In terms of biological role, the alpha subunit is responsible for the aldol cleavage of indoleglycerol phosphate to indole and glyceraldehyde 3-phosphate. In Streptococcus pneumoniae (strain 70585), this protein is Tryptophan synthase alpha chain.